The following is a 701-amino-acid chain: Elongation factor G (701 aa).

The tr-type G domain maps to 8–286 (DRVRNIGIIA…AVVLLLPSPL (279 aa)). GTP is bound by residues 17 to 24 (AHIDAGKT), 85 to 89 (DTPGH), and 139 to 142 (NKMD).

It belongs to the TRAFAC class translation factor GTPase superfamily. Classic translation factor GTPase family. EF-G/EF-2 subfamily.

It localises to the cytoplasm. Catalyzes the GTP-dependent ribosomal translocation step during translation elongation. During this step, the ribosome changes from the pre-translocational (PRE) to the post-translocational (POST) state as the newly formed A-site-bound peptidyl-tRNA and P-site-bound deacylated tRNA move to the P and E sites, respectively. Catalyzes the coordinated movement of the two tRNA molecules, the mRNA and conformational changes in the ribosome. This chain is Elongation factor G, found in Herpetosiphon aurantiacus (strain ATCC 23779 / DSM 785 / 114-95).